The sequence spans 307 residues: Probable protein S-acyltransferase 14 (307 aa).

2 helical membrane passes run 22-42 (LGSI…YAVV) and 63-83 (ILIL…SVVF). Residues 127–177 (RFCRKCNQLKPSRCHHCSVCGRCVLKMDHHCVWVVNCVGALNYKYFLLFLF) enclose the DHHC domain. Catalysis depends on Cys157, which acts as the S-palmitoyl cysteine intermediate. Transmembrane regions (helical) follow at residues 171–191 (YFLL…LVLM) and 213–233 (TFLA…FLIM).

This sequence belongs to the DHHC palmitoyltransferase family.

Its subcellular location is the golgi apparatus. It is found in the trans-Golgi network membrane. It carries out the reaction L-cysteinyl-[protein] + hexadecanoyl-CoA = S-hexadecanoyl-L-cysteinyl-[protein] + CoA. Palmitoyl acyltransferase. The sequence is that of Probable protein S-acyltransferase 14 (PAT14) from Arabidopsis thaliana (Mouse-ear cress).